We begin with the raw amino-acid sequence, 237 residues long: UPF0280 protein Mthe_1297 (237 aa).

This sequence belongs to the UPF0280 family.

This is UPF0280 protein Mthe_1297 from Methanothrix thermoacetophila (strain DSM 6194 / JCM 14653 / NBRC 101360 / PT) (Methanosaeta thermophila).